The primary structure comprises 214 residues: Adenylate kinase (214 aa).

Residue 10 to 15 (GAGKGT) coordinates ATP. The NMP stretch occupies residues 30–59 (STGDMLRAAIKAGTELGLEAKRVMDEGKLV). Residues threonine 31, arginine 36, 57–59 (KLV), 85–88 (GFPR), and glutamine 92 contribute to the AMP site. The LID stretch occupies residues 122–159 (GRRVHPASGRVYHVVYNPPKVEGKDNETGDDLIVRDDD). Residues arginine 123 and 132–133 (VY) contribute to the ATP site. Residues arginine 156 and arginine 167 each contribute to the AMP site. Arginine 200 lines the ATP pocket.

The protein belongs to the adenylate kinase family. As to quaternary structure, monomer.

Its subcellular location is the cytoplasm. It catalyses the reaction AMP + ATP = 2 ADP. It functions in the pathway purine metabolism; AMP biosynthesis via salvage pathway; AMP from ADP: step 1/1. Catalyzes the reversible transfer of the terminal phosphate group between ATP and AMP. Plays an important role in cellular energy homeostasis and in adenine nucleotide metabolism. This Alteromonas mediterranea (strain DSM 17117 / CIP 110805 / LMG 28347 / Deep ecotype) protein is Adenylate kinase.